We begin with the raw amino-acid sequence, 213 residues long: Large ribosomal subunit protein uL4 (213 aa).

The segment at 51-90 is disordered; sequence TASTLTKAEVRGGGRKPYKQKHTGRARQGSIRNPHYVGGG. Residues 63–75 show a composition bias toward basic residues; the sequence is GGRKPYKQKHTGR.

Belongs to the universal ribosomal protein uL4 family. In terms of assembly, part of the 50S ribosomal subunit.

Its function is as follows. One of the primary rRNA binding proteins, this protein initially binds near the 5'-end of the 23S rRNA. It is important during the early stages of 50S assembly. It makes multiple contacts with different domains of the 23S rRNA in the assembled 50S subunit and ribosome. In terms of biological role, forms part of the polypeptide exit tunnel. This Malacoplasma penetrans (strain HF-2) (Mycoplasma penetrans) protein is Large ribosomal subunit protein uL4.